The chain runs to 111 residues: Large ribosomal subunit protein uL22 (111 aa).

This sequence belongs to the universal ribosomal protein uL22 family. Part of the 50S ribosomal subunit.

In terms of biological role, this protein binds specifically to 23S rRNA; its binding is stimulated by other ribosomal proteins, e.g. L4, L17, and L20. It is important during the early stages of 50S assembly. It makes multiple contacts with different domains of the 23S rRNA in the assembled 50S subunit and ribosome. Its function is as follows. The globular domain of the protein is located near the polypeptide exit tunnel on the outside of the subunit, while an extended beta-hairpin is found that lines the wall of the exit tunnel in the center of the 70S ribosome. In Acidithiobacillus ferrooxidans (strain ATCC 23270 / DSM 14882 / CIP 104768 / NCIMB 8455) (Ferrobacillus ferrooxidans (strain ATCC 23270)), this protein is Large ribosomal subunit protein uL22.